Reading from the N-terminus, the 288-residue chain is Protease HtpX (288 aa).

The next 2 helical transmembrane spans lie at Ile5–Leu25 and Gly35–Ser55. Position 140 (His140) interacts with Zn(2+). The active site involves Glu141. His144 is a Zn(2+) binding site. Helical transmembrane passes span Leu155 to Ile175 and Ile194 to Phe214. Position 219 (Glu219) interacts with Zn(2+).

The protein belongs to the peptidase M48B family. Requires Zn(2+) as cofactor.

The protein localises to the cell inner membrane. The protein is Protease HtpX of Stenotrophomonas maltophilia (strain K279a).